Here is a 571-residue protein sequence, read N- to C-terminus: Protein dead ringer homolog (571 aa).

Disordered regions lie at residues 45 to 117 (QHQQ…EPDK) and 190 to 229 (KRMQ…SCNG). Basic and acidic residues predominate over residues 49 to 77 (RMMEQHKNDDVISNDVRCDDFSDGGERQR). The span at 195-206 (DHNIQQSTNHIP) shows a compositional bias: polar residues. Over residues 207 to 224 (TPSSASSHTSSGSVTSQT) the composition is skewed to low complexity. The 93-residue stretch at 249 to 341 (DIKRKEFLDD…YLYPFECERE (93 aa)) folds into the ARID domain. The segment covering 459-471 (AAHHAAQQAAQHQ) has biased composition (low complexity). Positions 459–528 (AAHHAAQQAA…GDRGRHNEMS (70 aa)) are disordered. One can recognise an REKLES domain in the interval 473–558 (SLKKEIDSDY…GVLFAHSPNH (86 aa)). Basic and acidic residues-rich tracts occupy residues 487–507 (PPEK…DNQR) and 518–527 (MGDRGRHNEM).

It is found in the nucleus. In terms of biological role, transcription factor. The protein is Protein dead ringer homolog (Ci-DRIL1/2) of Ciona intestinalis (Transparent sea squirt).